Here is a 95-residue protein sequence, read N- to C-terminus: MLHTLPHCASSVDFPALLRLLKEGDALLLLQDGVTVAIEGNRFLESLRDAPITVYALKEDIDARGLGGQISDSVVRVDYTEFVRLTVKYANQMAW.

This sequence belongs to the DsrH/TusB family. In terms of assembly, heterohexamer, formed by a dimer of trimers. The hexameric TusBCD complex contains 2 copies each of TusB, TusC and TusD. The TusBCD complex interacts with TusE.

The protein localises to the cytoplasm. Part of a sulfur-relay system required for 2-thiolation of 5-methylaminomethyl-2-thiouridine (mnm(5)s(2)U) at tRNA wobble positions. This Salmonella arizonae (strain ATCC BAA-731 / CDC346-86 / RSK2980) protein is Protein TusB.